A 106-amino-acid chain; its full sequence is UPF0060 membrane protein Csal_2746 (106 aa).

4 helical membrane passes run 6 to 26 (LLFIATAMAEIIGCYLPWLWL), 31 to 51 (SPWLLVPAAASLTLFVWLLSL), 59 to 79 (VYAAYGGVYVVCALVWLWGVD), and 85 to 105 (PTDWIGAALALTGMGVIASGW).

Belongs to the UPF0060 family.

The protein localises to the cell inner membrane. The sequence is that of UPF0060 membrane protein Csal_2746 from Chromohalobacter salexigens (strain ATCC BAA-138 / DSM 3043 / CIP 106854 / NCIMB 13768 / 1H11).